The primary structure comprises 828 residues: Periplasmic nitrate reductase (828 aa).

A signal peptide (tat-type signal) is located at residues 1 to 31 (MKLSRRSFMKANAVAAAAAAAGLSVPGVARA). Residues 39 to 95 (IKWDKAPCRFCGTGCGVLVGTQQGRVVACQGDPDAPVNRGLNCIKGYFLPKIMYGKD) form the 4Fe-4S Mo/W bis-MGD-type domain. Residues Cys-46, Cys-49, Cys-53, and Cys-81 each contribute to the [4Fe-4S] cluster site. Mo-bis(molybdopterin guanine dinucleotide)-binding positions include Lys-83, Gln-150, Asn-175, Cys-179, 212-219 (WGSNMAEM), 243-247 (STYQH), 262-264 (QSD), Met-372, Gln-376, Asn-482, 508-509 (SD), Lys-531, Asp-558, and 718-727 (TGRVLEHWHT). Phe-794 contacts substrate. Positions 802 and 819 each coordinate Mo-bis(molybdopterin guanine dinucleotide).

It belongs to the prokaryotic molybdopterin-containing oxidoreductase family. NasA/NapA/NarB subfamily. As to quaternary structure, component of the periplasmic nitrate reductase NapAB complex composed of NapA and NapB. The cofactor is [4Fe-4S] cluster. It depends on Mo-bis(molybdopterin guanine dinucleotide) as a cofactor. In terms of processing, predicted to be exported by the Tat system. The position of the signal peptide cleavage has not been experimentally proven.

Its subcellular location is the periplasm. It carries out the reaction 2 Fe(II)-[cytochrome] + nitrate + 2 H(+) = 2 Fe(III)-[cytochrome] + nitrite + H2O. Its function is as follows. Catalytic subunit of the periplasmic nitrate reductase complex NapAB. Receives electrons from NapB and catalyzes the reduction of nitrate to nitrite. The chain is Periplasmic nitrate reductase from Escherichia coli O81 (strain ED1a).